Reading from the N-terminus, the 183-residue chain is Translation initiation factor IF-3 (183 aa).

This sequence belongs to the IF-3 family. In terms of assembly, monomer.

Its subcellular location is the cytoplasm. IF-3 binds to the 30S ribosomal subunit and shifts the equilibrium between 70S ribosomes and their 50S and 30S subunits in favor of the free subunits, thus enhancing the availability of 30S subunits on which protein synthesis initiation begins. The chain is Translation initiation factor IF-3 from Pseudomonas aeruginosa (strain ATCC 15692 / DSM 22644 / CIP 104116 / JCM 14847 / LMG 12228 / 1C / PRS 101 / PAO1).